A 445-amino-acid polypeptide reads, in one-letter code: Trigger factor (445 aa).

Positions 172–257 (GDQVVIDFVG…VKSVNWAHMP (86 aa)) constitute a PPIase FKBP-type domain.

This sequence belongs to the FKBP-type PPIase family. Tig subfamily.

It is found in the cytoplasm. The catalysed reaction is [protein]-peptidylproline (omega=180) = [protein]-peptidylproline (omega=0). In terms of biological role, involved in protein export. Acts as a chaperone by maintaining the newly synthesized protein in an open conformation. Functions as a peptidyl-prolyl cis-trans isomerase. The chain is Trigger factor from Polynucleobacter asymbioticus (strain DSM 18221 / CIP 109841 / QLW-P1DMWA-1) (Polynucleobacter necessarius subsp. asymbioticus).